The primary structure comprises 477 residues: Leukotoxin export protein LtxD (477 aa).

The chain crosses the membrane as a helical span at residues 64 to 84 (IMLFLTLAIIVSIFSNVEIIA). Residues 206–287 (LNLNKKEAEK…ENEVLLAKEE (82 aa)) are a coiled coil.

The protein belongs to the membrane fusion protein (MFP) (TC 8.A.1) family. Probably part of a complex composed of LtxB, LtxD and TdeA, which forms a single transport channel across the two membranes.

It localises to the cell inner membrane. Functionally, involved in the export of the LtxA leukotoxin. This is Leukotoxin export protein LtxD from Aggregatibacter actinomycetemcomitans (Actinobacillus actinomycetemcomitans).